The sequence spans 387 residues: MRYLTAGESHGPQLTAIIEGVPSNLPISIEEINEQLARRQKGHGRGRRMQIEKDQVKILSGVRHGYTTGAPITLVVENKDWTHWQGIMSAEPVEEGSEEKRRVSRPRPGHADLNGAIKYHQRDMRNILERSSARETTVRVAVGAVARQLLAQFGIRIGGQVLQINEIVAKRQEVSLDELIARTEESPVRCLDKEAEPLMMAAIDKAKEDGDSLGGTVEVIVEGVPIGLGSHVQWDRKLDGRLAQAIMSIQAFKGVEIGIGFEAAGLKGSQVHDEIVWNEETGYSRKTNRAGGLEGGMTTGMPVVVRGVMKPIPTLYKPLMSVDIDSREPFSASIERSDSCAVPAASVVAEAVVAWEIANAMCEKFPSDSLDDMEENVRQYRAYTEKF.

2 residues coordinate NADP(+): arginine 39 and arginine 45. The interval 92-113 (PVEEGSEEKRRVSRPRPGHADL) is disordered. Residues 130-132 (RSS), 250-251 (QA), glycine 295, 310-314 (KPIPT), and arginine 336 contribute to the FMN site.

Belongs to the chorismate synthase family. In terms of assembly, homotetramer. FMNH2 serves as cofactor.

The enzyme catalyses 5-O-(1-carboxyvinyl)-3-phosphoshikimate = chorismate + phosphate. The protein operates within metabolic intermediate biosynthesis; chorismate biosynthesis; chorismate from D-erythrose 4-phosphate and phosphoenolpyruvate: step 7/7. Catalyzes the anti-1,4-elimination of the C-3 phosphate and the C-6 proR hydrogen from 5-enolpyruvylshikimate-3-phosphate (EPSP) to yield chorismate, which is the branch point compound that serves as the starting substrate for the three terminal pathways of aromatic amino acid biosynthesis. This reaction introduces a second double bond into the aromatic ring system. This Brevibacillus brevis (strain 47 / JCM 6285 / NBRC 100599) protein is Chorismate synthase.